Reading from the N-terminus, the 581-residue chain is Jasmonoyl--L-amino acid synthetase GH3.5 (581 aa).

An ATP-binding site is contributed by Ser92. Ser95 provides a ligand contact to jasmonate. ATP-binding positions include Thr115, Asn161, and 324–329; that span reads GASEGW. An an L-alpha-amino acid-binding site is contributed by 159–163; sequence TTNLY. Residues 321–324 and Ser326 contribute to the jasmonate site; that span reads ADYG. 534–538 serves as a coordination point for an L-alpha-amino acid; the sequence is EILDH. Residue Lys561 participates in ATP binding.

It belongs to the IAA-amido conjugating enzyme family. Expressed in green shoots, roots and flowers.

The catalysed reaction is a jasmonate + an L-alpha-amino acid + ATP = a jasmonyl-L-amino acid + AMP + diphosphate + H(+). In terms of biological role, catalyzes the synthesis of jasmonate-amino acid conjugates by adenylation. Catalyzes the conjugation of jasmonate (JA) to Ile when expressed in a heterologous system (E.coli). Catalyzes in vitro the conjugation of jasmonate (JA) to Ile, Phe, Cys, Leu, Met, Ala, Val and Trp. Involved in the production of JA-Ile in response to infection by the rice blast fungus Magnaporthe oryzae. Required for the accumulation of the flavonoid phytoalexin sakuranetin in response to infection by the rice blast fungus. Involved in herbivory-induced JA-Ile accumulation. Involved in the production of JA-Ile in response to wounding. Required for modulation of light and JA signaling in photomorphogenesis. Required for normal seed development. Required for optimal flower opening and closing and anther dehiscence. May catalyze the synthesis of indole-3-acetic acid (IAA)-amino acid conjugates, providing a mechanism for the plant to cope with the presence of excess auxin. This is Jasmonoyl--L-amino acid synthetase GH3.5 from Oryza sativa subsp. japonica (Rice).